We begin with the raw amino-acid sequence, 506 residues long: RNA-splicing ligase RtcB homolog (506 aa).

Residues D120, C123, H228, H260, and H354 each contribute to the Mn(2+) site. GMP is bound at residue 227-231; that stretch reads NHYAE. Residues 354–355, 403–406, S410, 429–432, and K505 each bind GMP; these read HN, GGSM, and HGAG. The GMP-histidine intermediate role is filled by H429.

This sequence belongs to the RtcB family. In terms of assembly, catalytic component of the tRNA-splicing ligase complex. Requires Mn(2+) as cofactor.

The enzyme catalyses a 3'-end 3'-phospho-ribonucleotide-RNA + a 5'-end dephospho-ribonucleoside-RNA + GTP = a ribonucleotidyl-ribonucleotide-RNA + GMP + diphosphate. It catalyses the reaction a 3'-end 2',3'-cyclophospho-ribonucleotide-RNA + a 5'-end dephospho-ribonucleoside-RNA + GTP + H2O = a ribonucleotidyl-ribonucleotide-RNA + GMP + diphosphate + H(+). In terms of biological role, catalytic subunit of the tRNA-splicing ligase complex that acts by directly joining spliced tRNA halves to mature-sized tRNAs by incorporating the precursor-derived splice junction phosphate into the mature tRNA as a canonical 3',5'-phosphodiester. May act as an RNA ligase with broad substrate specificity, and may function toward other RNAs. The sequence is that of RNA-splicing ligase RtcB homolog from Aedes aegypti (Yellowfever mosquito).